Here is a 326-residue protein sequence, read N- to C-terminus: Virulence-associated V antigen (326 aa).

It is found in the secreted. Functionally, possibly involved in calcium regulation of YOP expression, which includes the export process. The sequence is that of Virulence-associated V antigen (lcrV) from Yersinia pestis.